Reading from the N-terminus, the 697-residue chain is Elongation factor G (697 aa).

Positions 10-285 (AKTRNIGIMA…GVIDYLPSPL (276 aa)) constitute a tr-type G domain. Residues 19–26 (AHIDAGKT), 83–87 (DTPGH), and 137–140 (NKMD) contribute to the GTP site.

This sequence belongs to the TRAFAC class translation factor GTPase superfamily. Classic translation factor GTPase family. EF-G/EF-2 subfamily.

It localises to the cytoplasm. Its function is as follows. Catalyzes the GTP-dependent ribosomal translocation step during translation elongation. During this step, the ribosome changes from the pre-translocational (PRE) to the post-translocational (POST) state as the newly formed A-site-bound peptidyl-tRNA and P-site-bound deacylated tRNA move to the P and E sites, respectively. Catalyzes the coordinated movement of the two tRNA molecules, the mRNA and conformational changes in the ribosome. The protein is Elongation factor G of Lactobacillus acidophilus (strain ATCC 700396 / NCK56 / N2 / NCFM).